Here is a 109-residue protein sequence, read N- to C-terminus: Large ribosomal subunit protein uL24 (109 aa).

It belongs to the universal ribosomal protein uL24 family. In terms of assembly, part of the 50S ribosomal subunit.

Functionally, one of two assembly initiator proteins, it binds directly to the 5'-end of the 23S rRNA, where it nucleates assembly of the 50S subunit. Its function is as follows. One of the proteins that surrounds the polypeptide exit tunnel on the outside of the subunit. The polypeptide is Large ribosomal subunit protein uL24 (Rickettsia rickettsii (strain Iowa)).